The following is a 187-amino-acid chain: Crossover junction endodeoxyribonuclease RuvC (187 aa).

Catalysis depends on residues Asp7, Glu67, and Asp140. 3 residues coordinate Mg(2+): Asp7, Glu67, and Asp140.

This sequence belongs to the RuvC family. In terms of assembly, homodimer which binds Holliday junction (HJ) DNA. The HJ becomes 2-fold symmetrical on binding to RuvC with unstacked arms; it has a different conformation from HJ DNA in complex with RuvA. In the full resolvosome a probable DNA-RuvA(4)-RuvB(12)-RuvC(2) complex forms which resolves the HJ. It depends on Mg(2+) as a cofactor.

The protein resides in the cytoplasm. The enzyme catalyses Endonucleolytic cleavage at a junction such as a reciprocal single-stranded crossover between two homologous DNA duplexes (Holliday junction).. In terms of biological role, the RuvA-RuvB-RuvC complex processes Holliday junction (HJ) DNA during genetic recombination and DNA repair. Endonuclease that resolves HJ intermediates. Cleaves cruciform DNA by making single-stranded nicks across the HJ at symmetrical positions within the homologous arms, yielding a 5'-phosphate and a 3'-hydroxyl group; requires a central core of homology in the junction. The consensus cleavage sequence is 5'-(A/T)TT(C/G)-3'. Cleavage occurs on the 3'-side of the TT dinucleotide at the point of strand exchange. HJ branch migration catalyzed by RuvA-RuvB allows RuvC to scan DNA until it finds its consensus sequence, where it cleaves and resolves the cruciform DNA. The polypeptide is Crossover junction endodeoxyribonuclease RuvC (Chlorobium phaeobacteroides (strain DSM 266 / SMG 266 / 2430)).